A 291-amino-acid chain; its full sequence is Proteasomal ubiquitin receptor ADRM1 homolog rpn1301 (291 aa).

The Pru domain maps to 1–114; it reads MSLITFKAGK…ERINSYIKDQ (114 aa). Residues 135 to 162 are disordered; sequence TVEQSEPIAQPTESSKESSEIGAPNSDE. Positions 178–290 constitute a DEUBAD domain; it reads AQAGFGGSTV…ARFVSRNNGS (113 aa).

It belongs to the ADRM1 family. As to quaternary structure, component of the 19S proteasome regulatory particle complex. The 2 S.pombe rpn13 homologs, rpn1301 and rpn1302 are present at a 0.2-1 ratio.

The protein localises to the cytoplasm. It is found in the nucleus. Component of the 26S proteasome, a multiprotein complex involved in the ATP-dependent degradation of ubiquitinated proteins. This complex plays a key role in the maintenance of protein homeostasis by removing misfolded or damaged proteins, which could impair cellular functions, and by removing proteins whose functions are no longer required. Therefore, the proteasome participates in numerous cellular processes, including cell cycle progression, apoptosis, or DNA damage repair. Within the complex, functions as a proteasomal ubiquitin receptor. The polypeptide is Proteasomal ubiquitin receptor ADRM1 homolog rpn1301 (rpn1301) (Schizosaccharomyces pombe (strain 972 / ATCC 24843) (Fission yeast)).